The following is a 1056-amino-acid chain: Outer capsid protein VP5 (1056 aa).

This sequence belongs to the orthoreovirus lambda-2 protein family.

The protein localises to the virion. It catalyses the reaction a 5'-end diphospho-ribonucleoside in mRNA + GTP + H(+) = a 5'-end (5'-triphosphoguanosine)-ribonucleoside in mRNA + diphosphate. The catalysed reaction is a 5'-end (5'-triphosphoguanosine)-ribonucleoside in mRNA + S-adenosyl-L-methionine = a 5'-end (N(7)-methyl 5'-triphosphoguanosine)-ribonucleoside in mRNA + S-adenosyl-L-homocysteine. Functionally, outer capsid protein involved in mRNA capping. Catalyzes the last 3 enzymatic activities for formation of the 5' cap structure on the viral plus-strand transcripts, namely the RNA guanylyltransferase, RNA-7N- and RNA-2'O-methyltransferase activities. In Aedes pseudoscutellaris reovirus (isolate France) (ApRV), this protein is Outer capsid protein VP5 (S5).